The following is a 1185-amino-acid chain: Ovostatin homolog 1 (1185 aa).

An N-terminal signal peptide occupies residues 1 to 21 (MHVHVCVCLCVCIYTSSCVCA). Asn-80, Asn-155, Asn-347, Asn-452, and Asn-725 each carry an N-linked (GlcNAc...) asparagine glycan.

This sequence belongs to the protease inhibitor I39 (alpha-2-macroglobulin) family. Homotetramer.

It is found in the secreted. In terms of biological role, is able to inhibit all four classes of proteinases by a unique 'trapping' mechanism. The sequence is that of Ovostatin homolog 1 (OVOS1) from Homo sapiens (Human).